The chain runs to 473 residues: Photosystem II CP43 reaction center protein (473 aa).

Positions 1 to 14 (MKILYSLRRFYHVE) are excised as a propeptide. Residue threonine 15 is modified to N-acetylthreonine. Threonine 15 carries the phosphothreonine modification. Helical transmembrane passes span 69–93 (LFEVAHFVPEKPMYEQGLILLPHLA), 134–155 (LLGPETLEESFPFFGYVWKDRN), 178–200 (KALYFGGVYDTWAPGGGDVRKIT), 255–275 (KPFAWARRAFVWSGEAYLSYS), and 291–312 (WFNNTAYPSEFYGPTGPEASQA). Glutamate 367 is a [CaMn4O5] cluster binding site. A helical transmembrane segment spans residues 447–471 (RARAAAAGFEKGIDRDLEPVLFMTP).

The protein belongs to the PsbB/PsbC family. PsbC subfamily. PSII is composed of 1 copy each of membrane proteins PsbA, PsbB, PsbC, PsbD, PsbE, PsbF, PsbH, PsbI, PsbJ, PsbK, PsbL, PsbM, PsbT, PsbX, PsbY, PsbZ, Psb30/Ycf12, at least 3 peripheral proteins of the oxygen-evolving complex and a large number of cofactors. It forms dimeric complexes. Requires Binds multiple chlorophylls and provides some of the ligands for the Ca-4Mn-5O cluster of the oxygen-evolving complex. It may also provide a ligand for a Cl- that is required for oxygen evolution. PSII binds additional chlorophylls, carotenoids and specific lipids. as cofactor.

It is found in the plastid. The protein resides in the chloroplast thylakoid membrane. Its function is as follows. One of the components of the core complex of photosystem II (PSII). It binds chlorophyll and helps catalyze the primary light-induced photochemical processes of PSII. PSII is a light-driven water:plastoquinone oxidoreductase, using light energy to abstract electrons from H(2)O, generating O(2) and a proton gradient subsequently used for ATP formation. This Lemna minor (Common duckweed) protein is Photosystem II CP43 reaction center protein.